The following is a 248-amino-acid chain: Pulmonary surfactant-associated protein A2 (248 aa).

An N-terminal signal peptide occupies residues 1-20 (MWLCPLALTLILMAASGAAC). Residues 28–100 (GSPGIPGTPG…AGERGPPGLP (73 aa)) enclose the Collagen-like domain. Pro30, Pro33, Pro36, Pro42, Pro54, Pro57, Pro63, Pro67, and Pro70 each carry 4-hydroxyproline. The tract at residues 33-101 (PGTPGSHGLP…GERGPPGLPA (69 aa)) is disordered. Positions 42 to 51 (PGRDGRDGVK) are enriched in basic and acidic residues. A compositionally biased stretch (pro residues) spans 54–70 (PGPPGPMGPPGETPCPP). Residues 71–82 (GNNGLPGAPGVP) are compositionally biased toward low complexity. Residues 84–93 (ERGEKGEAGE) are compositionally biased toward basic and acidic residues. Residues 132–248 (MTVGEKVFSS…LYSRLTICEF (117 aa)) enclose the C-type lectin domain. 2 disulfide bridges follow: Cys155-Cys246 and Cys224-Cys238. Asn207 is a glycosylation site (N-linked (GlcNAc...) asparagine).

The protein belongs to the SFTPA family. As to quaternary structure, oligomeric complex of 6 set of homotrimers. Post-translationally, N-acetylated.

The protein resides in the secreted. It is found in the extracellular space. It localises to the extracellular matrix. Its subcellular location is the surface film. In presence of calcium ions, it binds to surfactant phospholipids and contributes to lower the surface tension at the air-liquid interface in the alveoli of the mammalian lung and is essential for normal respiration. This chain is Pulmonary surfactant-associated protein A2 (SFTPA2), found in Homo sapiens (Human).